A 61-amino-acid chain; its full sequence is Cobrotoxin-c (61 aa).

4 disulfide bridges follow: Cys-3/Cys-23, Cys-17/Cys-40, Cys-42/Cys-53, and Cys-54/Cys-59.

This sequence belongs to the three-finger toxin family. Short-chain subfamily. Type I alpha-neurotoxin sub-subfamily. Expressed by the venom gland.

The protein localises to the secreted. Functionally, produces peripheral paralysis by blocking neuromuscular transmission at the postsynaptic site. Binds to the nicotinic acetylcholine receptor. This is Cobrotoxin-c from Naja kaouthia (Monocled cobra).